We begin with the raw amino-acid sequence, 314 residues long: Acetaldehyde dehydrogenase (314 aa).

14–17 (SGNI) provides a ligand contact to NAD(+). Cysteine 132 functions as the Acyl-thioester intermediate in the catalytic mechanism. Residues 163-171 (SAGPGTRAN) and asparagine 291 each bind NAD(+).

Belongs to the acetaldehyde dehydrogenase family.

The catalysed reaction is acetaldehyde + NAD(+) + CoA = acetyl-CoA + NADH + H(+). This Polaromonas sp. (strain JS666 / ATCC BAA-500) protein is Acetaldehyde dehydrogenase.